We begin with the raw amino-acid sequence, 164 residues long: Shikimate kinase (164 aa).

11–16 (GSGKST) is an ATP binding site. Residue S15 participates in Mg(2+) binding. Residues D33, R57, and G79 each coordinate substrate. R117 provides a ligand contact to ATP. R134 serves as a coordination point for substrate.

Belongs to the shikimate kinase family. As to quaternary structure, monomer. Mg(2+) serves as cofactor.

It is found in the cytoplasm. The catalysed reaction is shikimate + ATP = 3-phosphoshikimate + ADP + H(+). Its pathway is metabolic intermediate biosynthesis; chorismate biosynthesis; chorismate from D-erythrose 4-phosphate and phosphoenolpyruvate: step 5/7. Catalyzes the specific phosphorylation of the 3-hydroxyl group of shikimic acid using ATP as a cosubstrate. This is Shikimate kinase from Persephonella marina (strain DSM 14350 / EX-H1).